We begin with the raw amino-acid sequence, 134 residues long: Insulin-like peptide 4 (134 aa).

Positions 1–26 are cleaved as a signal peptide; sequence MSLIRLGLALLLLLATVSQLLQPVQG. Disulfide bonds link C31–C120, C43–C133, and C119–C124. The propeptide at 54–108 is connecting peptide; it reads SSASKDARVRDLIRKLQQPDEDIEQETETGRLKQKHTDADTEKGVPPAVGSGRKL. Positions 72–107 are disordered; that stretch reads PDEDIEQETETGRLKQKHTDADTEKGVPPAVGSGRK. Residues 81–96 are compositionally biased toward basic and acidic residues; it reads ETGRLKQKHTDADTEK.

It belongs to the insulin family. Heterodimer of a B chain and an A chain linked by two disulfide bonds. In terms of tissue distribution, expressed at a high level in the embryonic mesoderm, with expression continuing after gastrulation and reducing from stage 12 onwards. Highly expressed in the embryonic anterior midgut rudiment and larval midgut.

It localises to the secreted. Possible ligand of InR/insulin-like receptor. The sequence is that of Insulin-like peptide 4 from Drosophila melanogaster (Fruit fly).